The chain runs to 122 residues: Nitrogen fixation nifHD region GlnB-like protein 2 (122 aa).

This sequence belongs to the P(II) protein family.

Could be involved in the regulation of nitrogen fixation. This Methanobacterium ivanovii protein is Nitrogen fixation nifHD region GlnB-like protein 2 (glnBB).